Consider the following 407-residue polypeptide: Lysosome-associated membrane glycoprotein 1 (407 aa).

Positions 1–21 (MAAPGAPRSLLLLLLAGLAHG) are cleaved as a signal peptide. A first lumenal domain region spans residues 22-189 (ASALFVVKDS…SKEETRCTQD (168 aa)). The Lumenal segment spans residues 22–371 (ASALFVVKDS…VEECMQDGNN (350 aa)). Asn32, Asn40, Asn57, Asn72, Asn79, Asn98, Asn102, Asn116, Asn125, Asn145, Asn160, and Asn178 each carry an N-linked (GlcNAc...) asparagine glycan. Cysteines 36 and 75 form a disulfide. Cys150 and Cys186 are disulfide-bonded. Residues 183–206 (ETRCTQDGPSPTTVPPSPSPPLVP) are disordered. The tract at residues 190–219 (GPSPTTVPPSPSPPLVPTNPTVIKYNVTGE) is hinge. A compositionally biased stretch (pro residues) spans 194–206 (TTVPPSPSPPLVP). Residues Asn215, Asn220, Asn233, Asn241, Asn253, Asn283, Asn297, Asn304, and Asn312 are each glycosylated (N-linked (GlcNAc...) asparagine). Residues 220 to 371 (NGTCLLASMA…VEECMQDGNN (152 aa)) are second lumenal domain. Cys223 and Cys260 are disulfide-bonded. Cys328 and Cys365 are joined by a disulfide. Residues 372–395 (MLIPIAVGGALAGLVLIVLIAYLI) form a helical membrane-spanning segment. The Cytoplasmic portion of the chain corresponds to 396-407 (GRKRSHAGYQTI).

The protein belongs to the LAMP family. Interacts with ABCB9; this interaction strongly stabilizes ABCB9 and protects ABCB9 against lysosomal degradation. Interacts with FURIN. Interacts with TMEM175; inhibiting the proton channel activity of TMEM175. O- and N-glycosylated; some of the N-glycans attached to LAMP-1 are polylactosaminoglycans.

The protein resides in the lysosome membrane. It localises to the endosome membrane. It is found in the late endosome membrane. Its subcellular location is the cell membrane. The protein localises to the cytolytic granule membrane. Functionally, lysosomal membrane glycoprotein which plays an important role in lysosome biogenesis, lysosomal pH regulation, autophagy and cholesterol homeostasis. Acts as an important regulator of lysosomal lumen pH regulation by acting as a direct inhibitor of the proton channel TMEM175, facilitating lysosomal acidification for optimal hydrolase activity. Also plays an important role in NK-cells cytotoxicity. Mechanistically, participates in cytotoxic granule movement to the cell surface and perforin trafficking to the lytic granule. In addition, protects NK-cells from degranulation-associated damage induced by their own cytotoxic granule content. Presents carbohydrate ligands to selectins. The sequence is that of Lysosome-associated membrane glycoprotein 1 (LAMP1) from Cricetulus griseus (Chinese hamster).